The primary structure comprises 584 residues: Extracellular serine/threonine protein kinase FAM20C (584 aa).

The Cytoplasmic segment spans residues 1-10; that stretch reads MKMMLVRRFR. Residues 1–92 constitute a propeptide that is removed on maturation; the sequence is MKMMLVRRFR…PNKHTLRILQ (92 aa). Residues 11-31 form a helical; Signal-anchor for type II membrane protein membrane-spanning segment; the sequence is VLILMVFLVACALHIALDLLP. The Lumenal portion of the chain corresponds to 32–584; that stretch reads RLERRGARPS…DTEHRAASAR (553 aa). Disordered stretches follow at residues 62-81 and 94-159; these read QVRG…GDAG and FSSD…GDAS. Low complexity-rich tracts occupy residues 71-81 and 95-112; these read PAASSAAGDAG and SSDP…KLPP. An N-linked (GlcNAc...) asparagine glycan is attached at Asn-101. Ser-106 carries the post-translational modification Phosphoserine. Residues 116-149 show a composition bias toward basic and acidic residues; the sequence is PAERALRGRDPGALRPHDPAHRPLLRDPGPRRSE. ATP-binding residues include Gln-269, Lys-285, and Glu-306. Glu-306 contacts Mn(2+). The N-linked (GlcNAc...) asparagine glycan is linked to Asn-335. Positions 354–565 are kinase domain; the sequence is FISPANNICF…AVRDCVERNG (212 aa). Disulfide bonds link Cys-362/Cys-378 and Cys-367/Cys-371. ATP is bound at residue 389–392; sequence AAFL. Cystine bridges form between Cys-426/Cys-500 and Cys-501/Cys-560. Residue Asp-458 is part of the active site. Residue Glu-463 participates in ATP binding. Asn-470 carries N-linked (GlcNAc...) asparagine glycosylation. Position 478 (Asp-478) interacts with ATP. Asp-478 lines the Mn(2+) pocket.

The protein belongs to the FAM20 family. Homodimer; disulfide-linked. Interacts with FAM20A; probably forming a heterotetramer of 2 subunits of FAM20A and 2 subunits of FAM20C. Interacts with protease MBTPS1/S1P; the interaction results in FAM20C cleavage and secretion. Interacts with COPII components SEC23A and SEC24A; transport of FAM20C from the endoplasmic reticulum to the Golgi is likely to be mediated by COPII vesicles. The cofactor is Mn(2+). Post-translationally, N-glycosylation is required for folding. Autophosphorylated. In terms of processing, propeptide cleavage by MBTPS1/S1P promotes FAM20C secretion and maximal kinase activity which is essential for efficient osteoblast differentiation and biomineralization. In terms of tissue distribution, widely expressed.

Its subcellular location is the golgi apparatus membrane. It is found in the secreted. The protein resides in the endoplasmic reticulum. The enzyme catalyses L-seryl-[protein] + ATP = O-phospho-L-seryl-[protein] + ADP + H(+). It carries out the reaction L-threonyl-[protein] + ATP = O-phospho-L-threonyl-[protein] + ADP + H(+). Its activity is regulated as follows. Serine/threonine protein kinase activity is increased upon interaction with FAM20A. Golgi serine/threonine protein kinase that phosphorylates secretory pathway proteins within Ser-x-Glu/pSer motifs and plays a key role in biomineralization of bones and teeth. Constitutes the main protein kinase for extracellular proteins, generating the majority of the extracellular phosphoproteome. Mainly phosphorylates proteins within the Ser-x-Glu/pSer motif, but also displays a broader substrate specificity. Phosphorylates ERO1A, enhancing its activity which is required to maintain endoplasmic reticulum redox homeostasis and for oxidative protein folding. During endoplasmic reticulum stress, phosphorylates P4HB/PDIA1 which induces a functional switch, causing P4HB to change from an oxidoreductase to a molecular chaperone. This is critical to maintain ER proteostasis and reduce cell death under ER stress. Phosphorylation of P4HB also promotes its interaction with ERN1, leading to reduced activity of ERN1, a key sensor for the endoplasmic reticulum unfolded protein response. Required for osteoblast differentiation and mineralization. Phosphorylates casein as well as a number of proteins involved in biomineralization such as AMELX, AMTN, ENAM and SPP1/OPN. In addition to its role in biomineralization, also plays a role in lipid homeostasis, wound healing and cell migration and adhesion. The chain is Extracellular serine/threonine protein kinase FAM20C from Homo sapiens (Human).